The primary structure comprises 534 residues: GMP synthase [glutamine-hydrolyzing] (534 aa).

A Glutamine amidotransferase type-1 domain is found at Met20 to Thr210. Cys97 acts as the Nucleophile in catalysis. Active-site residues include His184 and Glu186. One can recognise a GMPS ATP-PPase domain in the interval Trp211 to Arg409. Position 238–244 (Ser238–Ser244) interacts with ATP.

As to quaternary structure, homodimer.

The catalysed reaction is XMP + L-glutamine + ATP + H2O = GMP + L-glutamate + AMP + diphosphate + 2 H(+). It functions in the pathway purine metabolism; GMP biosynthesis; GMP from XMP (L-Gln route): step 1/1. In terms of biological role, catalyzes the synthesis of GMP from XMP. In Synechococcus sp. (strain ATCC 27144 / PCC 6301 / SAUG 1402/1) (Anacystis nidulans), this protein is GMP synthase [glutamine-hydrolyzing].